The sequence spans 415 residues: uncharacterized protein (415 aa).

Residue H88 coordinates Zn(2+). Residue D90 is part of the active site. D121 is a Zn(2+) binding site. E155 serves as the catalytic Proton acceptor. 3 residues coordinate Zn(2+): E156, D185, and H392.

Belongs to the peptidase M20A family. Requires Zn(2+) as cofactor. Co(2+) is required as a cofactor.

This is an uncharacterized protein from Methanococcus maripaludis (strain DSM 14266 / JCM 13030 / NBRC 101832 / S2 / LL).